The sequence spans 467 residues: Asparagine--tRNA ligase (467 aa).

It belongs to the class-II aminoacyl-tRNA synthetase family. In terms of assembly, homodimer.

The protein localises to the cytoplasm. The catalysed reaction is tRNA(Asn) + L-asparagine + ATP = L-asparaginyl-tRNA(Asn) + AMP + diphosphate + H(+). This Bacteroides fragilis (strain ATCC 25285 / DSM 2151 / CCUG 4856 / JCM 11019 / LMG 10263 / NCTC 9343 / Onslow / VPI 2553 / EN-2) protein is Asparagine--tRNA ligase.